The sequence spans 320 residues: tRNA uridine(34) hydroxylase (320 aa).

Residues 125 to 221 (KEKRPLLLDV…YGLKQGSEHW (97 aa)) form the Rhodanese domain. Residue cysteine 181 is the Cysteine persulfide intermediate of the active site.

Belongs to the TrhO family.

The catalysed reaction is uridine(34) in tRNA + AH2 + O2 = 5-hydroxyuridine(34) in tRNA + A + H2O. Catalyzes oxygen-dependent 5-hydroxyuridine (ho5U) modification at position 34 in tRNAs. In Protochlamydia amoebophila (strain UWE25), this protein is tRNA uridine(34) hydroxylase.